We begin with the raw amino-acid sequence, 659 residues long: Threonine--tRNA ligase (659 aa).

A TGS domain is found at 3 to 64 (EKIRITLIDN…LEDGRLEIIT (62 aa)). The tract at residues 249–555 (DHRRLGQEMD…LIEHHAGRFP (307 aa)) is catalytic. 3 residues coordinate Zn(2+): cysteine 354, histidine 405, and histidine 532.

The protein belongs to the class-II aminoacyl-tRNA synthetase family. In terms of assembly, homodimer. Requires Zn(2+) as cofactor.

It is found in the cytoplasm. The catalysed reaction is tRNA(Thr) + L-threonine + ATP = L-threonyl-tRNA(Thr) + AMP + diphosphate + H(+). Catalyzes the attachment of threonine to tRNA(Thr) in a two-step reaction: L-threonine is first activated by ATP to form Thr-AMP and then transferred to the acceptor end of tRNA(Thr). Also edits incorrectly charged L-seryl-tRNA(Thr). In Zymomonas mobilis subsp. mobilis (strain ATCC 31821 / ZM4 / CP4), this protein is Threonine--tRNA ligase.